The chain runs to 389 residues: Carbamoyl phosphate synthase small chain (389 aa).

Residues 1–197 (MMSSPAKAAK…AAKDASIGDD (197 aa)) are CPSase. Positions 51, 249, and 251 each coordinate L-glutamine. Residues 201–387 (HVVCMDFGMK…QEQLNEKCGV (187 aa)) enclose the Glutamine amidotransferase type-1 domain. The Nucleophile role is filled by Cys-276. L-glutamine is bound by residues Leu-277, Gln-280, Asn-318, Gly-320, and Phe-321. Residues His-360 and Glu-362 contribute to the active site.

This sequence belongs to the CarA family. In terms of assembly, composed of two chains; the small (or glutamine) chain promotes the hydrolysis of glutamine to ammonia, which is used by the large (or ammonia) chain to synthesize carbamoyl phosphate. Tetramer of heterodimers (alpha,beta)4.

It carries out the reaction hydrogencarbonate + L-glutamine + 2 ATP + H2O = carbamoyl phosphate + L-glutamate + 2 ADP + phosphate + 2 H(+). It catalyses the reaction L-glutamine + H2O = L-glutamate + NH4(+). It participates in amino-acid biosynthesis; L-arginine biosynthesis; carbamoyl phosphate from bicarbonate: step 1/1. The protein operates within pyrimidine metabolism; UMP biosynthesis via de novo pathway; (S)-dihydroorotate from bicarbonate: step 1/3. Its function is as follows. Small subunit of the glutamine-dependent carbamoyl phosphate synthetase (CPSase). CPSase catalyzes the formation of carbamoyl phosphate from the ammonia moiety of glutamine, carbonate, and phosphate donated by ATP, constituting the first step of 2 biosynthetic pathways, one leading to arginine and/or urea and the other to pyrimidine nucleotides. The small subunit (glutamine amidotransferase) binds and cleaves glutamine to supply the large subunit with the substrate ammonia. The protein is Carbamoyl phosphate synthase small chain of Rhodopirellula baltica (strain DSM 10527 / NCIMB 13988 / SH1).